Here is a 69-residue protein sequence, read N- to C-terminus: Probable cold shock protein y4cH (69 aa).

The CSD domain occupies 5 to 65 (GTVKWFNATK…DRKSGKMSAD (61 aa)).

The protein localises to the cytoplasm. This Sinorhizobium fredii (strain NBRC 101917 / NGR234) protein is Probable cold shock protein y4cH.